A 609-amino-acid chain; its full sequence is UvrABC system protein C (609 aa).

A GIY-YIG domain is found at 16-94 (SSPGVYRMYD…IKQYMPRYNV (79 aa)). Positions 203–238 (LQVMTELVSKMEASALALEYEQAASYRDQIAALRRV) constitute a UVR domain.

The protein belongs to the UvrC family. In terms of assembly, interacts with UvrB in an incision complex.

Its subcellular location is the cytoplasm. The UvrABC repair system catalyzes the recognition and processing of DNA lesions. UvrC both incises the 5' and 3' sides of the lesion. The N-terminal half is responsible for the 3' incision and the C-terminal half is responsible for the 5' incision. The chain is UvrABC system protein C from Shewanella sediminis (strain HAW-EB3).